We begin with the raw amino-acid sequence, 265 residues long: tRNA pseudouridine synthase A (265 aa).

Catalysis depends on aspartate 58, which acts as the Nucleophile. Residue tyrosine 116 coordinates substrate.

This sequence belongs to the tRNA pseudouridine synthase TruA family. In terms of assembly, homodimer.

The enzyme catalyses uridine(38/39/40) in tRNA = pseudouridine(38/39/40) in tRNA. In terms of biological role, formation of pseudouridine at positions 38, 39 and 40 in the anticodon stem and loop of transfer RNAs. The sequence is that of tRNA pseudouridine synthase A from Neisseria gonorrhoeae (strain NCCP11945).